The chain runs to 493 residues: Proline--tRNA ligase (493 aa).

Belongs to the class-II aminoacyl-tRNA synthetase family. ProS type 3 subfamily. In terms of assembly, homodimer.

The protein resides in the cytoplasm. It catalyses the reaction tRNA(Pro) + L-proline + ATP = L-prolyl-tRNA(Pro) + AMP + diphosphate. In terms of biological role, catalyzes the attachment of proline to tRNA(Pro) in a two-step reaction: proline is first activated by ATP to form Pro-AMP and then transferred to the acceptor end of tRNA(Pro). This chain is Proline--tRNA ligase, found in Porphyromonas gingivalis (strain ATCC 33277 / DSM 20709 / CIP 103683 / JCM 12257 / NCTC 11834 / 2561).